A 78-amino-acid polypeptide reads, in one-letter code: MSDIEQRVKKIVSEQLGANEADVKNESSFVDDLGADSLDTVELVMALEEEFDCEIPDEEAEKITTVQQAIDYVNANLK.

The Carrier domain maps to 2–77 (SDIEQRVKKI…QAIDYVNANL (76 aa)). An O-(pantetheine 4'-phosphoryl)serine modification is found at S37.

Belongs to the acyl carrier protein (ACP) family. In terms of processing, 4'-phosphopantetheine is transferred from CoA to a specific serine of apo-ACP by AcpS. This modification is essential for activity because fatty acids are bound in thioester linkage to the sulfhydryl of the prosthetic group.

The protein resides in the cytoplasm. Its pathway is lipid metabolism; fatty acid biosynthesis. Carrier of the growing fatty acid chain in fatty acid biosynthesis. The polypeptide is Acyl carrier protein (Methylobacillus flagellatus (strain ATCC 51484 / DSM 6875 / VKM B-1610 / KT)).